A 209-amino-acid chain; its full sequence is Imidazole glycerol phosphate synthase subunit HisH (209 aa).

The Glutamine amidotransferase type-1 domain maps to 3–209 (KIAIIDYGMG…SILKNFGEMK (207 aa)). Residue Cys-81 is the Nucleophile of the active site. Catalysis depends on residues His-190 and Glu-192.

As to quaternary structure, heterodimer of HisH and HisF.

Its subcellular location is the cytoplasm. It catalyses the reaction 5-[(5-phospho-1-deoxy-D-ribulos-1-ylimino)methylamino]-1-(5-phospho-beta-D-ribosyl)imidazole-4-carboxamide + L-glutamine = D-erythro-1-(imidazol-4-yl)glycerol 3-phosphate + 5-amino-1-(5-phospho-beta-D-ribosyl)imidazole-4-carboxamide + L-glutamate + H(+). The enzyme catalyses L-glutamine + H2O = L-glutamate + NH4(+). It participates in amino-acid biosynthesis; L-histidine biosynthesis; L-histidine from 5-phospho-alpha-D-ribose 1-diphosphate: step 5/9. In terms of biological role, IGPS catalyzes the conversion of PRFAR and glutamine to IGP, AICAR and glutamate. The HisH subunit catalyzes the hydrolysis of glutamine to glutamate and ammonia as part of the synthesis of IGP and AICAR. The resulting ammonia molecule is channeled to the active site of HisF. This is Imidazole glycerol phosphate synthase subunit HisH from Geobacter sulfurreducens (strain ATCC 51573 / DSM 12127 / PCA).